A 101-amino-acid polypeptide reads, in one-letter code: Apolipoprotein C-II (101 aa).

An N-terminal signal peptide occupies residues 1-22 (MGTRYFLVGFLILLVLGFEAQG). Residues 66-74 (TVDEKIRDI) are lipid binding. Residues 78 to 101 (STAAVTTYAGIITDQVFSILSGED) are lipoprotein lipase cofactor.

The protein belongs to the apolipoprotein C2 family. In terms of processing, proapolipoprotein C-II is synthesized as a sialic acid containing glycoprotein which is subsequently desialylated prior to its proteolytic processing. Proapolipoprotein C-II, the major form found in plasma undergoes proteolytic cleavage of its N-terminal hexapeptide to generate apolipoprotein C-II, which occurs as the minor form in plasma.

Its subcellular location is the secreted. Functionally, component of chylomicrons, very low-density lipoproteins (VLDL), low-density lipoproteins (LDL), and high-density lipoproteins (HDL) in plasma. Plays an important role in lipoprotein metabolism as an activator of lipoprotein lipase. Both proapolipoprotein C-II and apolipoprotein C-II can activate lipoprotein lipase. The chain is Apolipoprotein C-II (APOC2) from Capra hircus aegagrus (Wild goat).